The chain runs to 60 residues: UPF0434 protein ECA2555 (60 aa).

Belongs to the UPF0434 family.

The sequence is that of UPF0434 protein ECA2555 from Pectobacterium atrosepticum (strain SCRI 1043 / ATCC BAA-672) (Erwinia carotovora subsp. atroseptica).